The following is a 246-amino-acid chain: MPNTILKLERIRKDLELSRSIRQTIIPNLSLSIERGEFVTITGPSGSGKSTLLYLMGGLDKPTSGSVWLDGDELTAKNESEMNRIRNEKIGFIYQFHFLLPEFTAVENVSMPMLINGRRSRKEIRDRAMMLLDLVELQDKYTNKPNQMSGGQQQRVAIARALANEPKVLLGDEPTGNLDSRSANNVYQLFDRLNRELQQTIIVVTHDEAFANRASRRIHLVDGQVAYDRQLRTEASVTNEAASLVS.

The region spanning leucine 6–leucine 244 is the ABC transporter domain. Glycine 43–serine 50 contacts ATP.

Belongs to the ABC transporter superfamily. Lipoprotein translocase (TC 3.A.1.125) family. In terms of assembly, the complex is composed of two ATP-binding proteins (LolD) and two transmembrane proteins (LolC and LolE).

It is found in the cell inner membrane. Part of the ABC transporter complex LolCDE involved in the translocation of mature outer membrane-directed lipoproteins, from the inner membrane to the periplasmic chaperone, LolA. Responsible for the formation of the LolA-lipoprotein complex in an ATP-dependent manner. In Chlorobium chlorochromatii (strain CaD3), this protein is Lipoprotein-releasing system ATP-binding protein LolD 1.